The chain runs to 316 residues: MADTAITVDGAEKRYGDKKALDGLDLRVARGTVHGVLGPNGAGKTTLVRVLSTLLRPDAGRIEVSGHDVVREAYAVRLRIGLLGQHAALDEELGGRQNLELFGRLHHLGARRARARADELLERFDLADTGRKTVRQYSGGMRRRLDLAASLITEPEVLFLDEPTTGLDPRGRAEVWDSVRSLVGGGTTVLLTTQYLEEADQLADRISVVDAGRVIAEGTADELKAETGGDRIDVVLREAGQLGAAVALLPLTGVTVDTDRRLLSAPVTDRMEALSGVVRALQEAGIEAEDVALRRPTLDEVFLHLTGDDRRVKEAA.

In terms of domain architecture, ABC transporter spans Ile-6–Leu-236. An ATP-binding site is contributed by Gly-38–Thr-45.

The protein belongs to the ABC transporter superfamily. Drug exporter-1 (DrugE1) (TC 3.A.1.105) family. In terms of assembly, the complex is probably composed of two ATP-binding proteins (DrrA3) and two transmembrane proteins (DrrB3).

The protein resides in the cell membrane. The enzyme catalyses daunorubicin(in) + ATP + H2O = daunorubicin(out) + ADP + phosphate + H(+). Its function is as follows. Part of the ABC transporter complex DrrA3B3 involved in daunorubicin efflux. Responsible for energy coupling to the transport system. Confers self-resistance to daunorubicin, an antibiotic produced by S.coeruleorubidus. The efficiency of DrrA3B3 to export daunorubicin is probably lower than that of DrrA1B1 or DrrA2B2. The sequence is that of Daunorubicin resistance ATP-binding protein DrrA3 from Streptomyces coeruleorubidus.